Here is a 175-residue protein sequence, read N- to C-terminus: ATP synthase subunit b (175 aa).

A helical transmembrane segment spans residues 20 to 40; that stretch reads LIFWTAITFVIVLLILKKIAW.

Belongs to the ATPase B chain family. As to quaternary structure, F-type ATPases have 2 components, F(1) - the catalytic core - and F(0) - the membrane proton channel. F(1) has five subunits: alpha(3), beta(3), gamma(1), delta(1), epsilon(1). F(0) has four main subunits: a(1), b(2) and c(10-14). The alpha and beta chains form an alternating ring which encloses part of the gamma chain. F(1) is attached to F(0) by a central stalk formed by the gamma and epsilon chains, while a peripheral stalk is formed by the delta and b chains.

It localises to the cell inner membrane. F(1)F(0) ATP synthase produces ATP from ADP in the presence of a proton or sodium gradient. F-type ATPases consist of two structural domains, F(1) containing the extramembraneous catalytic core and F(0) containing the membrane proton channel, linked together by a central stalk and a peripheral stalk. During catalysis, ATP synthesis in the catalytic domain of F(1) is coupled via a rotary mechanism of the central stalk subunits to proton translocation. In terms of biological role, component of the F(0) channel, it forms part of the peripheral stalk, linking F(1) to F(0). The polypeptide is ATP synthase subunit b (Chlorobium chlorochromatii (strain CaD3)).